Consider the following 214-residue polypeptide: Thiamine-phosphate synthase (214 aa).

4-amino-2-methyl-5-(diphosphooxymethyl)pyrimidine is bound by residues 37–41 (QYREK) and asparagine 73. Mg(2+) contacts are provided by aspartate 74 and aspartate 93. Residue serine 112 participates in 4-amino-2-methyl-5-(diphosphooxymethyl)pyrimidine binding. 2-[(2R,5Z)-2-carboxy-4-methylthiazol-5(2H)-ylidene]ethyl phosphate is bound at residue 139-141 (TIS). Lysine 142 serves as a coordination point for 4-amino-2-methyl-5-(diphosphooxymethyl)pyrimidine. 2-[(2R,5Z)-2-carboxy-4-methylthiazol-5(2H)-ylidene]ethyl phosphate is bound by residues glycine 171 and 191–192 (IS).

Belongs to the thiamine-phosphate synthase family. Requires Mg(2+) as cofactor.

It catalyses the reaction 2-[(2R,5Z)-2-carboxy-4-methylthiazol-5(2H)-ylidene]ethyl phosphate + 4-amino-2-methyl-5-(diphosphooxymethyl)pyrimidine + 2 H(+) = thiamine phosphate + CO2 + diphosphate. It carries out the reaction 2-(2-carboxy-4-methylthiazol-5-yl)ethyl phosphate + 4-amino-2-methyl-5-(diphosphooxymethyl)pyrimidine + 2 H(+) = thiamine phosphate + CO2 + diphosphate. The enzyme catalyses 4-methyl-5-(2-phosphooxyethyl)-thiazole + 4-amino-2-methyl-5-(diphosphooxymethyl)pyrimidine + H(+) = thiamine phosphate + diphosphate. The protein operates within cofactor biosynthesis; thiamine diphosphate biosynthesis; thiamine phosphate from 4-amino-2-methyl-5-diphosphomethylpyrimidine and 4-methyl-5-(2-phosphoethyl)-thiazole: step 1/1. Its function is as follows. Condenses 4-methyl-5-(beta-hydroxyethyl)thiazole monophosphate (THZ-P) and 2-methyl-4-amino-5-hydroxymethyl pyrimidine pyrophosphate (HMP-PP) to form thiamine monophosphate (TMP). The chain is Thiamine-phosphate synthase from Listeria monocytogenes serotype 4a (strain HCC23).